The sequence spans 407 residues: Imidazolonepropionase (407 aa).

Residues histidine 74 and histidine 76 each coordinate Fe(3+). The Zn(2+) site is built by histidine 74 and histidine 76. Positions 83, 146, and 179 each coordinate 4-imidazolone-5-propanoate. Tyrosine 146 lines the N-formimidoyl-L-glutamate pocket. A Fe(3+)-binding site is contributed by histidine 244. Histidine 244 serves as a coordination point for Zn(2+). Glutamine 247 contacts 4-imidazolone-5-propanoate. Aspartate 319 lines the Fe(3+) pocket. Residue aspartate 319 participates in Zn(2+) binding. Asparagine 321 and glycine 323 together coordinate N-formimidoyl-L-glutamate. Threonine 324 serves as a coordination point for 4-imidazolone-5-propanoate.

The protein belongs to the metallo-dependent hydrolases superfamily. HutI family. It depends on Zn(2+) as a cofactor. Fe(3+) serves as cofactor.

The protein resides in the cytoplasm. It carries out the reaction 4-imidazolone-5-propanoate + H2O = N-formimidoyl-L-glutamate. It participates in amino-acid degradation; L-histidine degradation into L-glutamate; N-formimidoyl-L-glutamate from L-histidine: step 3/3. Its function is as follows. Catalyzes the hydrolytic cleavage of the carbon-nitrogen bond in imidazolone-5-propanoate to yield N-formimidoyl-L-glutamate. It is the third step in the universal histidine degradation pathway. In Salmonella typhimurium (strain LT2 / SGSC1412 / ATCC 700720), this protein is Imidazolonepropionase.